The chain runs to 336 residues: F420-dependent glucose-6-phosphate dehydrogenase (336 aa).

Aspartate 39 contributes to the coenzyme F420-(gamma-Glu)n binding site. The active-site Proton donor is histidine 40. Residues threonine 76 and 107-108 contribute to the coenzyme F420-(gamma-Glu)n site; that span reads TG. Glutamate 109 (proton acceptor) is an active-site residue. Residues asparagine 112, 177 to 178, and 180 to 181 contribute to the coenzyme F420-(gamma-Glu)n site; these read GG and AV. Residues threonine 195, lysine 198, lysine 259, and arginine 283 each contribute to the substrate site.

This sequence belongs to the F420-dependent glucose-6-phosphate dehydrogenase family. In terms of assembly, homodimer.

It catalyses the reaction oxidized coenzyme F420-(gamma-L-Glu)(n) + D-glucose 6-phosphate + H(+) = 6-phospho-D-glucono-1,5-lactone + reduced coenzyme F420-(gamma-L-Glu)(n). Its function is as follows. Catalyzes the coenzyme F420-dependent oxidation of glucose 6-phosphate (G6P) to 6-phosphogluconolactone. Appears to have a role in resistance to oxidative stress, via its consumption of G6P that serves as a source of reducing power to combat oxidative stress in mycobacteria. The chain is F420-dependent glucose-6-phosphate dehydrogenase from Mycobacterium avium (strain 104).